Reading from the N-terminus, the 422-residue chain is Multifunctional CCA protein (422 aa).

Gly-8 and Arg-11 together coordinate ATP. Residues Gly-8 and Arg-11 each contribute to the CTP site. Asp-21 and Asp-23 together coordinate Mg(2+). ATP is bound by residues Arg-91, Arg-137, and Arg-140. CTP-binding residues include Arg-91, Arg-137, and Arg-140. One can recognise an HD domain in the interval 228 to 329; the sequence is TGLHSLMALE…VKLLQSCDAW (102 aa). Positions 403 to 422 are disordered; it reads FKQDNAPEAQEKGGEDVGLT.

It belongs to the tRNA nucleotidyltransferase/poly(A) polymerase family. Bacterial CCA-adding enzyme type 1 subfamily. In terms of assembly, monomer. Can also form homodimers and oligomers. The cofactor is Mg(2+). Requires Ni(2+) as cofactor.

It carries out the reaction a tRNA precursor + 2 CTP + ATP = a tRNA with a 3' CCA end + 3 diphosphate. The catalysed reaction is a tRNA with a 3' CCA end + 2 CTP + ATP = a tRNA with a 3' CCACCA end + 3 diphosphate. Its function is as follows. Catalyzes the addition and repair of the essential 3'-terminal CCA sequence in tRNAs without using a nucleic acid template. Adds these three nucleotides in the order of C, C, and A to the tRNA nucleotide-73, using CTP and ATP as substrates and producing inorganic pyrophosphate. tRNA 3'-terminal CCA addition is required both for tRNA processing and repair. Also involved in tRNA surveillance by mediating tandem CCA addition to generate a CCACCA at the 3' terminus of unstable tRNAs. While stable tRNAs receive only 3'-terminal CCA, unstable tRNAs are marked with CCACCA and rapidly degraded. In Hahella chejuensis (strain KCTC 2396), this protein is Multifunctional CCA protein.